The sequence spans 510 residues: Citrate lyase alpha chain (510 aa).

As to quaternary structure, oligomer with a subunit composition of (alpha,beta,gamma)6.

Its subcellular location is the cytoplasm. The enzyme catalyses citrate = oxaloacetate + acetate. The catalysed reaction is citrate + acetyl-CoA = (3S)-citryl-CoA + acetate. In terms of biological role, represents a citrate:acetyl-ACP transferase. The protein is Citrate lyase alpha chain (citF) of Escherichia coli (strain K12).